A 168-amino-acid chain; its full sequence is HTH-type transcriptional regulator IscR (168 aa).

An HTH rrf2-type domain is found at 2-131 (KLTSKGRYAV…NNITLGELMK (130 aa)). Positions 28 to 51 (LADISERQGISLSYLEQLFSKLRK) form a DNA-binding region, H-T-H motif. 3 residues coordinate [2Fe-2S] cluster: C92, C98, and C104.

The cofactor is [2Fe-2S] cluster.

In terms of biological role, regulates the transcription of several operons and genes involved in the biogenesis of Fe-S clusters and Fe-S-containing proteins. This chain is HTH-type transcriptional regulator IscR, found in Vibrio campbellii (strain ATCC BAA-1116).